The following is a 215-amino-acid chain: N-(5'-phosphoribosyl)anthranilate isomerase (215 aa).

This sequence belongs to the TrpF family.

The enzyme catalyses N-(5-phospho-beta-D-ribosyl)anthranilate = 1-(2-carboxyphenylamino)-1-deoxy-D-ribulose 5-phosphate. It participates in amino-acid biosynthesis; L-tryptophan biosynthesis; L-tryptophan from chorismate: step 3/5. The chain is N-(5'-phosphoribosyl)anthranilate isomerase from Cellvibrio japonicus (strain Ueda107) (Pseudomonas fluorescens subsp. cellulosa).